Reading from the N-terminus, the 248-residue chain is TPR repeat-containing protein slr0751 (248 aa).

TPR repeat units lie at residues 61–94 (PEAI…SPDS), 95–128 (PETH…DRYY), 129–162 (IPPY…DPNR), and 163–196 (YKAY…RPDY).

In Synechocystis sp. (strain ATCC 27184 / PCC 6803 / Kazusa), this protein is TPR repeat-containing protein slr0751.